The sequence spans 367 residues: S-adenosylmethionine:tRNA ribosyltransferase-isomerase (367 aa).

The interval 150–182 is disordered; sequence RHGEEEESSDEAISSQNPEIATESKRTPSNDDK. Residues 171–182 are compositionally biased toward basic and acidic residues; sequence TESKRTPSNDDK.

It belongs to the QueA family. Monomer.

It localises to the cytoplasm. The enzyme catalyses 7-aminomethyl-7-carbaguanosine(34) in tRNA + S-adenosyl-L-methionine = epoxyqueuosine(34) in tRNA + adenine + L-methionine + 2 H(+). It functions in the pathway tRNA modification; tRNA-queuosine biosynthesis. Transfers and isomerizes the ribose moiety from AdoMet to the 7-aminomethyl group of 7-deazaguanine (preQ1-tRNA) to give epoxyqueuosine (oQ-tRNA). The polypeptide is S-adenosylmethionine:tRNA ribosyltransferase-isomerase (Rickettsia felis (strain ATCC VR-1525 / URRWXCal2) (Rickettsia azadi)).